A 196-amino-acid polypeptide reads, in one-letter code: Nucleoid occlusion factor SlmA (196 aa).

In terms of domain architecture, HTH tetR-type spans S7 to L68. Residues T31–F50 constitute a DNA-binding region (H-T-H motif). Positions E65–K142 form a coiled coil.

Belongs to the nucleoid occlusion factor SlmA family. As to quaternary structure, homodimer. Interacts with FtsZ.

It localises to the cytoplasm. The protein resides in the nucleoid. Functionally, required for nucleoid occlusion (NO) phenomenon, which prevents Z-ring formation and cell division over the nucleoid. Acts as a DNA-associated cell division inhibitor that binds simultaneously chromosomal DNA and FtsZ, and disrupts the assembly of FtsZ polymers. SlmA-DNA-binding sequences (SBS) are dispersed on non-Ter regions of the chromosome, preventing FtsZ polymerization at these regions. The sequence is that of Nucleoid occlusion factor SlmA from Vibrio atlanticus (strain LGP32) (Vibrio splendidus (strain Mel32)).